Reading from the N-terminus, the 384-residue chain is uncharacterized protein (384 aa).

12 helical membrane passes run 22–42 (LAFF…PFAK), 52–72 (LGLL…LTGV), 81–101 (AVIL…VLMN), 106–126 (MAIA…AMNI), 143–163 (FHGL…ALLW), 164–184 (LGLN…ILLL), 202–222 (LFVF…VMFL), 240–260 (GMSP…MTLG), 276–296 (VLLG…SIDS), 299–319 (AAII…PILF), 327–347 (VMPA…GILA), and 352–372 (IGFI…ALLL).

This sequence belongs to the major facilitator superfamily.

It localises to the membrane. This is an uncharacterized protein from Yersinia pestis.